The sequence spans 275 residues: MKNWIVGMVALVTMVPVMAATPWQKITHPVAGSPQSIGGFANGCVIGAQPLPLESADYQVMRSDQRRYFGHPDLLNFIHRLSAQAHQQQLGTVLIGDMAMPAGGRFSSGHASHQSGLDVDIWLQLPKQRWSQQQLLKPQPIDLVAVDGKRVIPALWQPQIESLIKLAAKDNDVTRIFVNPAIKKQLCLDAGADRQWLHKVRPWFAHRAHMHVRLRCPANSLECVDQDTPPPGDGCGAELESWFQPPPPSAKPGKTLPPPLPPSCQALLDNHFATE.

Residues 1-19 form the signal peptide; the sequence is MKNWIVGMVALVTMVPVMA. 3 disulfides stabilise this stretch: Cys44–Cys264, Cys187–Cys235, and Cys216–Cys223. 5 residues coordinate Zn(2+): His110, His113, Asp120, Asp147, and His211. Residues 227–262 form a disordered region; it reads DTPPPGDGCGAELESWFQPPPPSAKPGKTLPPPLPP. Pro residues predominate over residues 244 to 262; it reads QPPPPSAKPGKTLPPPLPP.

Belongs to the peptidase M74 family. Dimer. Zn(2+) is required as a cofactor.

It localises to the periplasm. In terms of biological role, murein endopeptidase that cleaves the D-alanyl-meso-2,6-diamino-pimelyl amide bond that connects peptidoglycan strands. Likely plays a role in the removal of murein from the sacculus. The chain is Penicillin-insensitive murein endopeptidase from Yersinia pestis bv. Antiqua (strain Antiqua).